We begin with the raw amino-acid sequence, 263 residues long: uncharacterized protein (263 aa).

The first 22 residues, 1-22 (MGYLKRLVLYIVIMVMSVFIIG), serve as a signal peptide directing secretion. Cysteine 23 carries N-palmitoyl cysteine lipidation. Cysteine 23 carries the S-diacylglycerol cysteine lipid modification.

Belongs to the staphylococcal tandem lipoprotein family.

It localises to the cell membrane. This is an uncharacterized protein from Staphylococcus aureus (strain N315).